The sequence spans 1289 residues: DNA-directed RNA polymerase subunit beta (1289 aa).

It belongs to the RNA polymerase beta chain family. In terms of assembly, the RNAP catalytic core consists of 2 alpha, 1 beta, 1 beta' and 1 omega subunit. When a sigma factor is associated with the core the holoenzyme is formed, which can initiate transcription.

The catalysed reaction is RNA(n) + a ribonucleoside 5'-triphosphate = RNA(n+1) + diphosphate. Functionally, DNA-dependent RNA polymerase catalyzes the transcription of DNA into RNA using the four ribonucleoside triphosphates as substrates. The protein is DNA-directed RNA polymerase subunit beta of Methylacidiphilum infernorum (isolate V4) (Methylokorus infernorum (strain V4)).